The chain runs to 578 residues: Phosphoenolpyruvate-protein phosphotransferase (578 aa).

Histidine 195 (tele-phosphohistidine intermediate) is an active-site residue. Residues arginine 302 and arginine 338 each coordinate phosphoenolpyruvate. Mg(2+) contacts are provided by glutamate 437 and aspartate 461. Residues 460–461 (ND) and arginine 471 each bind phosphoenolpyruvate. Cysteine 508 serves as the catalytic Proton donor.

This sequence belongs to the PEP-utilizing enzyme family. In terms of assembly, homodimer. The cofactor is Mg(2+).

The protein resides in the cytoplasm. It catalyses the reaction L-histidyl-[protein] + phosphoenolpyruvate = N(pros)-phospho-L-histidyl-[protein] + pyruvate. In terms of biological role, general (non sugar-specific) component of the phosphoenolpyruvate-dependent sugar phosphotransferase system (sugar PTS). This major carbohydrate active-transport system catalyzes the phosphorylation of incoming sugar substrates concomitantly with their translocation across the cell membrane. Enzyme I transfers the phosphoryl group from phosphoenolpyruvate (PEP) to the phosphoryl carrier protein (HPr). The sequence is that of Phosphoenolpyruvate-protein phosphotransferase (ptsI) from Bacillus sp. (strain S).